The primary structure comprises 271 residues: Neurexophilin-1 (271 aa).

The signal sequence occupies residues methionine 1–cysteine 21. The tract at residues alanine 22–leucine 97 is II. N-linked (GlcNAc...) asparagine glycans are attached at residues asparagine 23, asparagine 68, asparagine 93, asparagine 146, asparagine 156, and asparagine 162. The interval glutamine 98–phenylalanine 176 is III. Residues aspartate 177–aspartate 185 form an IV (linker domain) region. The segment at alanine 186–glycine 271 is v (Cys-rich).

Belongs to the neurexophilin family. In terms of processing, may be proteolytically processed at the boundary between the N-terminal non-conserved and the central conserved domain in neuron-like cells.

It is found in the secreted. May be signaling molecules that resemble neuropeptides. Ligand for alpha-neurexins. The sequence is that of Neurexophilin-1 (NXPH1) from Bos taurus (Bovine).